The following is a 193-amino-acid chain: Peptidyl-tRNA hydrolase (193 aa).

Y17 is a tRNA binding site. The active-site Proton acceptor is H22. 3 residues coordinate tRNA: Y68, N70, and N116.

This sequence belongs to the PTH family. Monomer.

It is found in the cytoplasm. It carries out the reaction an N-acyl-L-alpha-aminoacyl-tRNA + H2O = an N-acyl-L-amino acid + a tRNA + H(+). Functionally, hydrolyzes ribosome-free peptidyl-tRNAs (with 1 or more amino acids incorporated), which drop off the ribosome during protein synthesis, or as a result of ribosome stalling. Catalyzes the release of premature peptidyl moieties from peptidyl-tRNA molecules trapped in stalled 50S ribosomal subunits, and thus maintains levels of free tRNAs and 50S ribosomes. The sequence is that of Peptidyl-tRNA hydrolase from Chromobacterium violaceum (strain ATCC 12472 / DSM 30191 / JCM 1249 / CCUG 213 / NBRC 12614 / NCIMB 9131 / NCTC 9757 / MK).